The following is a 311-amino-acid chain: Aspartate carbamoyltransferase catalytic subunit (311 aa).

Residues Arg55 and Thr56 each coordinate carbamoyl phosphate. L-aspartate is bound at residue Lys85. Carbamoyl phosphate-binding residues include Arg106, His135, and Gln138. Residues Arg168 and Arg230 each contribute to the L-aspartate site. Carbamoyl phosphate is bound by residues Leu268 and Pro269.

It belongs to the aspartate/ornithine carbamoyltransferase superfamily. ATCase family. As to quaternary structure, heterododecamer (2C3:3R2) of six catalytic PyrB chains organized as two trimers (C3), and six regulatory PyrI chains organized as three dimers (R2).

It catalyses the reaction carbamoyl phosphate + L-aspartate = N-carbamoyl-L-aspartate + phosphate + H(+). Its pathway is pyrimidine metabolism; UMP biosynthesis via de novo pathway; (S)-dihydroorotate from bicarbonate: step 2/3. Functionally, catalyzes the condensation of carbamoyl phosphate and aspartate to form carbamoyl aspartate and inorganic phosphate, the committed step in the de novo pyrimidine nucleotide biosynthesis pathway. The chain is Aspartate carbamoyltransferase catalytic subunit from Proteus mirabilis (strain HI4320).